Here is a 1050-residue protein sequence, read N- to C-terminus: DNA-directed RNA polymerase subunit beta (1050 aa).

It belongs to the RNA polymerase beta chain family. In plastids the minimal PEP RNA polymerase catalytic core is composed of four subunits: alpha, beta, beta', and beta''. When a (nuclear-encoded) sigma factor is associated with the core the holoenzyme is formed, which can initiate transcription (Potential).

The protein localises to the plastid. Its subcellular location is the apicoplast. It catalyses the reaction RNA(n) + a ribonucleoside 5'-triphosphate = RNA(n+1) + diphosphate. DNA-dependent RNA polymerase catalyzes the transcription of DNA into RNA using the four ribonucleoside triphosphates as substrates. This chain is DNA-directed RNA polymerase subunit beta (rpoB), found in Neospora caninum (Coccidian parasite).